Here is a 120-residue protein sequence, read N- to C-terminus: Large ribosomal subunit protein uL18 (120 aa).

Belongs to the universal ribosomal protein uL18 family. Part of the 50S ribosomal subunit; part of the 5S rRNA/L5/L18/L25 subcomplex. Contacts the 5S and 23S rRNAs.

This is one of the proteins that bind and probably mediate the attachment of the 5S RNA into the large ribosomal subunit, where it forms part of the central protuberance. This is Large ribosomal subunit protein uL18 from Bacillus pumilus (strain SAFR-032).